A 321-amino-acid chain; its full sequence is Gap junction delta-2 protein (321 aa).

Residues 1-19 (MGEWTILERLLEAAVQQHS) are Cytoplasmic-facing. Residues 20 to 42 (TMIGRILLTVVVIFRILIVAIVG) traverse the membrane as a helical segment. The Extracellular portion of the chain corresponds to 43–75 (ETVYDDEQTMFVCNTLQPGCNQACYDRAFPISH). A helical transmembrane segment spans residues 76–98 (IRYWVFQIIMVCTPSLCFITYSV). The Cytoplasmic portion of the chain corresponds to 99–197 (HQSAKQRERR…KLRRQEGISR (99 aa)). The tract at residues 120-141 (PAESIGGPGGTGGGGSGGSKRE) is disordered. Residues 125 to 137 (GGPGGTGGGGSGG) show a composition bias toward gly residues. Residues 198 to 220 (FYIIQVVFRNALEIGFLVGQYFL) traverse the membrane as a helical segment. The Extracellular segment spans residues 221 to 252 (YGFSVPGLYECNRYPCIKEVECYVSRPTEKTV). The chain crosses the membrane as a helical span at residues 253–275 (FLVFMFAVSGICVVLNLAELNHL). The Cytoplasmic segment spans residues 276–321 (GWRKIKLAVRGAQAKRKSVYEIRNKDLPRVSVPNFGRTQSSDSAYV).

This sequence belongs to the connexin family. Delta-type subfamily. As to quaternary structure, a connexon is composed of a hexamer of connexins. Highly expressed in neurons.

It is found in the cell membrane. It localises to the cell junction. Its subcellular location is the gap junction. In terms of biological role, one gap junction consists of a cluster of closely packed pairs of transmembrane channels, the connexons, through which materials of low MW diffuse from one cell to a neighboring cell. In Mus musculus (Mouse), this protein is Gap junction delta-2 protein (Gjd2).